The primary structure comprises 948 residues: UvrABC system protein A (948 aa).

31–38 is an ATP binding site; the sequence is GLSGSGKS. Residues 249–277 form a C4-type zinc finger; it reads CPNGHDIGFTELSPRMFSFNSPYGACETC. ABC transporter domains lie at 307–586 and 606–934; these read WAGS…KNSL and GNGS…QYLK. 638 to 645 is an ATP binding site; sequence GVSGSGKS. Residues 737 to 763 form a C4-type zinc finger; that stretch reads CETCEGDGILKIEMHFLPDVYVTCEVC.

It belongs to the ABC transporter superfamily. UvrA family. In terms of assembly, forms a heterotetramer with UvrB during the search for lesions.

The protein localises to the cytoplasm. Its function is as follows. The UvrABC repair system catalyzes the recognition and processing of DNA lesions. UvrA is an ATPase and a DNA-binding protein. A damage recognition complex composed of 2 UvrA and 2 UvrB subunits scans DNA for abnormalities. When the presence of a lesion has been verified by UvrB, the UvrA molecules dissociate. The chain is UvrABC system protein A from Leptospira interrogans serogroup Icterohaemorrhagiae serovar copenhageni (strain Fiocruz L1-130).